Reading from the N-terminus, the 764-residue chain is Protein FAR1-RELATED SEQUENCE 7 (764 aa).

Positions 42 to 118 (DYYNSYATRT…QKEHNHDLGG (77 aa)) constitute an FAR1 1 domain. Residues 119-144 (HIEEAQTTPRPSVQQRAPAPTKLGIS) form a disordered region. Positions 123–133 (AQTTPRPSVQQ) are enriched in polar residues. Residues 204-280 (QFYQAYAEVV…NKDHNHDLEP (77 aa)) form the FAR1 2 domain. The MULE domain maps to 375–471 (AVVFDTSYRK…SAWQIRSKER (97 aa)). The segment at 650-686 (HAVTFSASNLNASCSCQMFEYEGLLCRHILKVFNLLD) adopts an SWIM-type zinc-finger fold.

Belongs to the FHY3/FAR1 family. Expressed in hypocotyls, rosette and cauline leaves, inflorescences stems, flowers and siliques.

It localises to the nucleus. Its function is as follows. Putative transcription activator involved in regulating light control of development. The protein is Protein FAR1-RELATED SEQUENCE 7 (FRS7) of Arabidopsis thaliana (Mouse-ear cress).